Here is a 501-residue protein sequence, read N- to C-terminus: Leukocyte receptor cluster member 9 (501 aa).

4 disordered regions span residues 1 to 43 (MGSR…PAPP), 61 to 86 (RQPHPGAPAPPGREAQPEAGAKKPPL), 203 to 234 (GQEAQAAPKRGSTRPLCTGHQEPGVEEPGELE), and 281 to 300 (QALGVPGGSAETTEAEWGPA). The C3H1-type zinc-finger motif lies at 40–67 (PAPPPACRFFLEGRCRFGARCRQPHPGA).

This is Leukocyte receptor cluster member 9 (LENG9) from Homo sapiens (Human).